A 418-amino-acid polypeptide reads, in one-letter code: Glutamyl-tRNA reductase (418 aa).

Residues 49 to 52 (TCNR), Ser109, 114 to 116 (EPQ), and Gln120 contribute to the substrate site. Catalysis depends on Cys50, which acts as the Nucleophile. 189–194 (GAGETI) is a binding site for NADP(+).

Belongs to the glutamyl-tRNA reductase family. In terms of assembly, homodimer.

The catalysed reaction is (S)-4-amino-5-oxopentanoate + tRNA(Glu) + NADP(+) = L-glutamyl-tRNA(Glu) + NADPH + H(+). The protein operates within porphyrin-containing compound metabolism; protoporphyrin-IX biosynthesis; 5-aminolevulinate from L-glutamyl-tRNA(Glu): step 1/2. Functionally, catalyzes the NADPH-dependent reduction of glutamyl-tRNA(Glu) to glutamate 1-semialdehyde (GSA). In Escherichia coli O7:K1 (strain IAI39 / ExPEC), this protein is Glutamyl-tRNA reductase.